Here is a 264-residue protein sequence, read N- to C-terminus: MTGHHGWGYGQDDGPSHWHKLYPIAQGDRQSPINIISSQAVYSPSLQPLELSYEACMSLSITNNGHSVQVDFNDSDDRTVVTGGPLEGPYRLKQFHFHWGKKHDVGSEHTVDGKSFPSELHLVHWNAKKYSTFGEAASAPDGLAVVGVFLETGDEHPSMNRLTDALYMVRFKGTKAQFSCFNPKCLLPASRHYWTYPGSLTTPPLSESVTWIVLREPICISERQMGKFRSLLFTSEDDERIHMVNNFRPPQPLKGRVVKASFRA.

Residues 5–262 enclose the Alpha-carbonic anhydrase domain; it reads HGWGYGQDDG…LKGRVVKASF (258 aa). Catalysis depends on His66, which acts as the Proton donor/acceptor. Zn(2+)-binding residues include His96, His98, and His121. 201 to 202 lines the substrate pocket; sequence TT.

The protein belongs to the alpha-carbonic anhydrase family. Requires Zn(2+) as cofactor.

It is found in the cytoplasm. The catalysed reaction is hydrogencarbonate + H(+) = CO2 + H2O. Its activity is regulated as follows. Activated by histamine, L-adrenaline, L- and D-histidine, and L- and D-phenylalanine. Inhibited by coumarins, sulfonamide derivatives such as acetazolamide (AZA), by saccharin and Foscarnet (phosphonoformate trisodium salt). Functionally, reversible hydration of carbon dioxide. The protein is Carbonic anhydrase 7 (CA7) of Homo sapiens (Human).